Reading from the N-terminus, the 998-residue chain is Methyl sulfide methyltransferase-associated sensor (998 aa).

The 38-residue stretch at Phe40–Asp77 folds into the PAS 1 domain. Residues Phe117–Ala169 enclose the PAC 1 domain. Residues Leu209–Gly246 form the PAS 2 domain. The PAC 2 domain maps to Phe250–Ser302. The GAF 1 domain maps to Ala314–Glu458. In terms of domain architecture, PAS 3 spans Ser469–Gly540. The region spanning Ala609–Gln752 is the GAF 2 domain. A heme-binding site is contributed by Cys656. Residues Glu783–Lys998 enclose the Histidine kinase domain.

Heme serves as cofactor. In terms of processing, autophosphorylates: autophosphorylation is dependent on the redox state of heme cofactor and is promoted upon reduction.

The protein localises to the cytoplasm. The catalysed reaction is ATP + protein L-histidine = ADP + protein N-phospho-L-histidine.. In terms of biological role, heme-binding sensor kinase component part of a two-component regulatory system involved in methyl sulfide metabolism. Does not act as a phytochrome-like photoreceptor. The chain is Methyl sulfide methyltransferase-associated sensor (msmS) from Methanosarcina acetivorans (strain ATCC 35395 / DSM 2834 / JCM 12185 / C2A).